The primary structure comprises 181 residues: Ras-like protein 1 (181 aa).

A GTP-binding site is contributed by 10-17 (GAGGVGKS). An Effector region motif is present at residues 32 to 40 (YDPTIEDSY). Residues 57 to 61 (DTAGQ) and 116 to 119 (NKCD) each bind GTP. Cys-178 bears the Cysteine methyl ester mark. Cys-178 carries the S-geranylgeranyl cysteine lipid modification. A propeptide spans 179–181 (KML) (removed in mature form).

This sequence belongs to the small GTPase superfamily. Ras family.

It localises to the cell membrane. It catalyses the reaction GTP + H2O = GDP + phosphate + H(+). Its activity is regulated as follows. Alternates between an inactive form bound to GDP and an active form bound to GTP. Activated by a guanine nucleotide-exchange factor (GEF) and inactivated by a GTPase-activating protein (GAP). Functionally, ras proteins bind GDP/GTP and possess intrinsic GTPase activity. Plays a role in eye development by regulating cell growth, survival of postmitotic ommatidial cells and differentiation of photoreceptor cells. During larval development, mediates Ptth/tor signaling leading to the production of ecdysone, a hormone required for the initiation of metamorphosis. This Drosophila mojavensis (Fruit fly) protein is Ras-like protein 1.